Reading from the N-terminus, the 509-residue chain is Maturase K (509 aa).

This sequence belongs to the intron maturase 2 family. MatK subfamily.

The protein resides in the plastid. It is found in the chloroplast. Its function is as follows. Usually encoded in the trnK tRNA gene intron. Probably assists in splicing its own and other chloroplast group II introns. The chain is Maturase K from Solanum bulbocastanum (Wild potato).